Reading from the N-terminus, the 141-residue chain is Large ribosomal subunit protein uL11 (141 aa).

Belongs to the universal ribosomal protein uL11 family. Part of the ribosomal stalk of the 50S ribosomal subunit. Interacts with L10 and the large rRNA to form the base of the stalk. L10 forms an elongated spine to which L12 dimers bind in a sequential fashion forming a multimeric L10(L12)X complex. In terms of processing, one or more lysine residues are methylated.

Functionally, forms part of the ribosomal stalk which helps the ribosome interact with GTP-bound translation factors. The polypeptide is Large ribosomal subunit protein uL11 (Synechococcus sp. (strain ATCC 27144 / PCC 6301 / SAUG 1402/1) (Anacystis nidulans)).